The primary structure comprises 331 residues: Tetraacyldisaccharide 4'-kinase (331 aa).

57–64 (SVGGNGKT) is a binding site for ATP.

Belongs to the LpxK family.

It carries out the reaction a lipid A disaccharide + ATP = a lipid IVA + ADP + H(+). It functions in the pathway glycolipid biosynthesis; lipid IV(A) biosynthesis; lipid IV(A) from (3R)-3-hydroxytetradecanoyl-[acyl-carrier-protein] and UDP-N-acetyl-alpha-D-glucosamine: step 6/6. Functionally, transfers the gamma-phosphate of ATP to the 4'-position of a tetraacyldisaccharide 1-phosphate intermediate (termed DS-1-P) to form tetraacyldisaccharide 1,4'-bis-phosphate (lipid IVA). In Histophilus somni (strain 2336) (Haemophilus somnus), this protein is Tetraacyldisaccharide 4'-kinase.